A 215-amino-acid chain; its full sequence is Cytochrome b6 (215 aa).

A helical membrane pass occupies residues 32 to 52 (IFYCLGGITFTCFLVQVATGF). Cysteine 35 contacts heme c. Heme b is bound by residues histidine 86 and histidine 100. 3 consecutive transmembrane segments (helical) span residues 90-110 (ASMM…TGGF), 116-136 (LTWT…VTGY), and 186-206 (LHTF…FLMI). Residues histidine 187 and histidine 202 each contribute to the heme b site.

Belongs to the cytochrome b family. PetB subfamily. The 4 large subunits of the cytochrome b6-f complex are cytochrome b6, subunit IV (17 kDa polypeptide, PetD), cytochrome f and the Rieske protein, while the 4 small subunits are PetG, PetL, PetM and PetN. The complex functions as a dimer. It depends on heme b as a cofactor. Heme c serves as cofactor.

The protein localises to the plastid. Its subcellular location is the chloroplast thylakoid membrane. Its function is as follows. Component of the cytochrome b6-f complex, which mediates electron transfer between photosystem II (PSII) and photosystem I (PSI), cyclic electron flow around PSI, and state transitions. The polypeptide is Cytochrome b6 (Stigeoclonium helveticum (Green alga)).